The following is a 185-amino-acid chain: Ribosome maturation factor RimM (185 aa).

The PRC barrel domain occupies 106–185; it reads SGEYYWKDLL…IIEVDWDPGF (80 aa).

It belongs to the RimM family. Binds ribosomal protein uS19.

It is found in the cytoplasm. Its function is as follows. An accessory protein needed during the final step in the assembly of 30S ribosomal subunit, possibly for assembly of the head region. Essential for efficient processing of 16S rRNA. May be needed both before and after RbfA during the maturation of 16S rRNA. It has affinity for free ribosomal 30S subunits but not for 70S ribosomes. The polypeptide is Ribosome maturation factor RimM (Sodalis glossinidius (strain morsitans)).